Reading from the N-terminus, the 190-residue chain is Abscisic acid receptor PYL2 (190 aa).

The START-like stretch occupies residues 28–182 (FEPDPTTCTS…NLQKLGVAAT (155 aa)). Abscisate is bound by residues K64, 93–98 (ASTSTE), 120–126 (RLKNYKS), and E147. The Gate loop signature appears at 89–93 (SGLPA). Residues 119-121 (HRL) carry the Latch loop motif.

This sequence belongs to the PYR/PYL/RCAR abscisic acid intracellular receptor family. In terms of assembly, homodimer. Binds ABA on one subunit only. Interacts with HAB1, ABI1 and ABI2, and possibly with other PP2Cs. Binds to CARs protein in an ABA-independent manner, both at the plasma membrane and in the nucleus.

It is found in the cytoplasm. The protein resides in the nucleus. Its subcellular location is the cell membrane. Receptor for abscisic acid (ABA) required for ABA-mediated responses such as stomatal closure and germination inhibition. Inhibits the activity of group-A protein phosphatases type 2C (PP2Cs) when activated by ABA. Can be activated by both (-)-ABA and (+)-ABA. The polypeptide is Abscisic acid receptor PYL2 (PYL2) (Arabidopsis thaliana (Mouse-ear cress)).